A 368-amino-acid polypeptide reads, in one-letter code: DNA replication and repair protein RecF (368 aa).

30-37 (GDNGAGKT) contributes to the ATP binding site.

The protein belongs to the RecF family.

It is found in the cytoplasm. Functionally, the RecF protein is involved in DNA metabolism; it is required for DNA replication and normal SOS inducibility. RecF binds preferentially to single-stranded, linear DNA. It also seems to bind ATP. The chain is DNA replication and repair protein RecF from Xanthomonas euvesicatoria pv. vesicatoria (strain 85-10) (Xanthomonas campestris pv. vesicatoria).